An 87-amino-acid polypeptide reads, in one-letter code: Small ribosomal subunit protein uS15 (87 aa).

This sequence belongs to the universal ribosomal protein uS15 family. As to quaternary structure, part of the 30S ribosomal subunit. Forms a bridge to the 50S subunit in the 70S ribosome, contacting the 23S rRNA.

In terms of biological role, one of the primary rRNA binding proteins, it binds directly to 16S rRNA where it helps nucleate assembly of the platform of the 30S subunit by binding and bridging several RNA helices of the 16S rRNA. Forms an intersubunit bridge (bridge B4) with the 23S rRNA of the 50S subunit in the ribosome. The sequence is that of Small ribosomal subunit protein uS15 from Dehalococcoides mccartyi (strain ATCC BAA-2266 / KCTC 15142 / 195) (Dehalococcoides ethenogenes (strain 195)).